We begin with the raw amino-acid sequence, 66 residues long: Putative antitoxin APE_0279a.1 (66 aa).

It belongs to the UPF0165 family.

Its function is as follows. Possibly the antitoxin component of a type II toxin-antitoxin (TA) system. The polypeptide is Putative antitoxin APE_0279a.1 (Aeropyrum pernix (strain ATCC 700893 / DSM 11879 / JCM 9820 / NBRC 100138 / K1)).